A 179-amino-acid polypeptide reads, in one-letter code: UPF0227 protein Ssed_2836 (179 aa).

This sequence belongs to the UPF0227 family.

In Shewanella sediminis (strain HAW-EB3), this protein is UPF0227 protein Ssed_2836.